Consider the following 486-residue polypeptide: Malonate-semialdehyde dehydrogenase (486 aa).

The NAD(+) site is built by phenylalanine 154, lysine 178, glutamate 181, arginine 182, and serine 231. Cysteine 286 functions as the Nucleophile in the catalytic mechanism. Glutamate 386 is a binding site for NAD(+).

Belongs to the aldehyde dehydrogenase family. IolA subfamily. In terms of assembly, homotetramer.

The enzyme catalyses 3-oxopropanoate + NAD(+) + CoA + H2O = hydrogencarbonate + acetyl-CoA + NADH + H(+). It catalyses the reaction 2-methyl-3-oxopropanoate + NAD(+) + CoA + H2O = propanoyl-CoA + hydrogencarbonate + NADH + H(+). It functions in the pathway polyol metabolism; myo-inositol degradation into acetyl-CoA; acetyl-CoA from myo-inositol: step 7/7. In terms of biological role, catalyzes the oxidation of malonate semialdehyde (MSA) and methylmalonate semialdehyde (MMSA) into acetyl-CoA and propanoyl-CoA, respectively. Is involved in a myo-inositol catabolic pathway. Bicarbonate, and not CO2, is the end-product of the enzymatic reaction. The polypeptide is Malonate-semialdehyde dehydrogenase (Bacillus cereus (strain G9842)).